The sequence spans 358 residues: UDP-3-O-acylglucosamine N-acyltransferase (358 aa).

H248 functions as the Proton acceptor in the catalytic mechanism.

Belongs to the transferase hexapeptide repeat family. LpxD subfamily. In terms of assembly, homotrimer.

It carries out the reaction a UDP-3-O-[(3R)-3-hydroxyacyl]-alpha-D-glucosamine + a (3R)-hydroxyacyl-[ACP] = a UDP-2-N,3-O-bis[(3R)-3-hydroxyacyl]-alpha-D-glucosamine + holo-[ACP] + H(+). The protein operates within bacterial outer membrane biogenesis; LPS lipid A biosynthesis. Its function is as follows. Catalyzes the N-acylation of UDP-3-O-acylglucosamine using 3-hydroxyacyl-ACP as the acyl donor. Is involved in the biosynthesis of lipid A, a phosphorylated glycolipid that anchors the lipopolysaccharide to the outer membrane of the cell. This chain is UDP-3-O-acylglucosamine N-acyltransferase, found in Synechococcus sp. (strain WH7803).